The sequence spans 529 residues: Listeriolysin O (529 aa).

The signal sequence occupies residues 1–24; that stretch reads MKKIMLVFITLILVSLPIAQQTEA. A run of 4 beta stranded transmembrane segments spans residues 214 to 227, 234 to 243, 312 to 321, and 329 to 341; these read ESQLIAKFGTAFKA, VNFGAISEGK, STKVKAAFDA, and SGDVELTNIIKNS. The Conserved undecapeptide signature appears at 483-493; that stretch reads ECTGLAWEWWR. Residues 515 to 516 carry the Cholesterol binding motif; sequence TL.

This sequence belongs to the cholesterol-dependent cytolysin family. As to quaternary structure, homooligomeric pore complex of 35 to 50 subunits; when inserted in the host membrane.

The protein resides in the secreted. It localises to the host membrane. It is found in the host cell membrane. Activity of listeriolysin O is regulated on multiple levels. It should be high in the phagosome, thereby allowing escape of the bacteria from the phagosomal compartment. Then, once inside the host cytosol, the activity must be controlled to prevent lysis of the host plasma membrane and loss of the intracellular environment. Its function is as follows. A cholesterol-dependent toxin that causes cytolysis by forming pores in cholesterol containing host membranes. After binding to target membranes, the protein undergoes a major conformation change, leading to its insertion in the host membrane and formation of an oligomeric pore complex. Cholesterol is required for binding to host membranes, membrane insertion and pore formation; cholesterol binding is mediated by a Thr-Leu pair in the C-terminus. Acts as a major virulence factor required for the escape of bacteria from phagosomal vacuoles and entry into the host cytosol. Can be reversibly inactivated by oxidation. This chain is Listeriolysin O (hly), found in Listeria monocytogenes serotype 4b (strain CLIP80459).